We begin with the raw amino-acid sequence, 336 residues long: Inositol 2-dehydrogenase (336 aa).

It belongs to the Gfo/Idh/MocA family. Homotetramer.

The enzyme catalyses myo-inositol + NAD(+) = scyllo-inosose + NADH + H(+). In terms of biological role, involved in the oxidation of myo-inositol (MI) to 2-keto-myo-inositol (2KMI or 2-inosose). The sequence is that of Inositol 2-dehydrogenase from Pseudomonas fluorescens (strain SBW25).